The sequence spans 304 residues: UDP-N-acetylenolpyruvoylglucosamine reductase (304 aa).

Residues 31-196 form the FAD-binding PCMH-type domain; sequence RVGGPAERFY…VAAELELAPG (166 aa). Residue R176 is part of the active site. Residue S225 is the Proton donor of the active site. E295 is an active-site residue.

This sequence belongs to the MurB family. The cofactor is FAD.

Its subcellular location is the cytoplasm. It catalyses the reaction UDP-N-acetyl-alpha-D-muramate + NADP(+) = UDP-N-acetyl-3-O-(1-carboxyvinyl)-alpha-D-glucosamine + NADPH + H(+). The protein operates within cell wall biogenesis; peptidoglycan biosynthesis. Its function is as follows. Cell wall formation. The sequence is that of UDP-N-acetylenolpyruvoylglucosamine reductase from Methylococcus capsulatus (strain ATCC 33009 / NCIMB 11132 / Bath).